Reading from the N-terminus, the 270-residue chain is 3-phenylpropionate-dihydrodiol/cinnamic acid-dihydrodiol dehydrogenase (270 aa).

An NAD(+)-binding site is contributed by 10–34 (FITGGGSGLGLALVERFIEEGAQVA). Serine 143 is a binding site for substrate. Tyrosine 156 (proton acceptor) is an active-site residue.

The protein belongs to the short-chain dehydrogenases/reductases (SDR) family.

The enzyme catalyses 3-(cis-5,6-dihydroxycyclohexa-1,3-dien-1-yl)propanoate + NAD(+) = 3-(2,3-dihydroxyphenyl)propanoate + NADH + H(+). It catalyses the reaction (2E)-3-(cis-5,6-dihydroxycyclohexa-1,3-dien-1-yl)prop-2-enoate + NAD(+) = (2E)-3-(2,3-dihydroxyphenyl)prop-2-enoate + NADH + H(+). The protein operates within aromatic compound metabolism; 3-phenylpropanoate degradation. Functionally, converts 3-phenylpropionate-dihydrodiol (PP-dihydrodiol) and cinnamic acid-dihydrodiol (CI-dihydrodiol) into 3-(2,3-dihydroxylphenyl)propanoic acid (DHPP) and 2,3-dihydroxicinnamic acid (DHCI), respectively. The chain is 3-phenylpropionate-dihydrodiol/cinnamic acid-dihydrodiol dehydrogenase from Shigella flexneri serotype 5b (strain 8401).